The following is a 173-amino-acid chain: Crossover junction endodeoxyribonuclease RuvC (173 aa).

Catalysis depends on residues D11, E71, and D143. Positions 11, 71, and 143 each coordinate Mg(2+).

The protein belongs to the RuvC family. As to quaternary structure, homodimer which binds Holliday junction (HJ) DNA. The HJ becomes 2-fold symmetrical on binding to RuvC with unstacked arms; it has a different conformation from HJ DNA in complex with RuvA. In the full resolvosome a probable DNA-RuvA(4)-RuvB(12)-RuvC(2) complex forms which resolves the HJ. Mg(2+) serves as cofactor.

The protein localises to the cytoplasm. The enzyme catalyses Endonucleolytic cleavage at a junction such as a reciprocal single-stranded crossover between two homologous DNA duplexes (Holliday junction).. Its function is as follows. The RuvA-RuvB-RuvC complex processes Holliday junction (HJ) DNA during genetic recombination and DNA repair. Endonuclease that resolves HJ intermediates. Cleaves cruciform DNA by making single-stranded nicks across the HJ at symmetrical positions within the homologous arms, yielding a 5'-phosphate and a 3'-hydroxyl group; requires a central core of homology in the junction. The consensus cleavage sequence is 5'-(A/T)TT(C/G)-3'. Cleavage occurs on the 3'-side of the TT dinucleotide at the point of strand exchange. HJ branch migration catalyzed by RuvA-RuvB allows RuvC to scan DNA until it finds its consensus sequence, where it cleaves and resolves the cruciform DNA. The protein is Crossover junction endodeoxyribonuclease RuvC of Brucella suis (strain ATCC 23445 / NCTC 10510).